Here is a 218-residue protein sequence, read N- to C-terminus: Non-structural protein NP-1 (218 aa).

Disordered stretches follow at residues 1–89 (MSSG…RTNP) and 195–218 (TESEEITDEEMLSAAESMETDASN). Basic residues-rich tracts occupy residues 8–18 (DKHRAYKRKGS) and 27–40 (PWQPHHRSRSRSPI). Residues 58 to 67 (SHLSSCTASK) are compositionally biased toward polar residues. Positions 73-86 (TKTKENTSGKRDSR) are enriched in basic and acidic residues. A compositionally biased stretch (acidic residues) spans 196–205 (ESEEITDEEM).

It belongs to the Bocaparvovirus Non-structural protein NP-1 family.

Its subcellular location is the host nucleus. Required for the expression of the capsid proteins. Performs the splicing and internal polyadenylation of the viral capsid-encoding mRNA precursor, which allows its maturation and expression. Transactivates the viral promoter. The sequence is that of Non-structural protein NP-1 (NP1) from Human bocavirus 3 (HBoV3).